A 417-amino-acid chain; its full sequence is Serine hydroxymethyltransferase (417 aa).

(6S)-5,6,7,8-tetrahydrofolate-binding positions include leucine 121 and 125 to 127 (GHL). Lysine 229 carries the N6-(pyridoxal phosphate)lysine modification. A (6S)-5,6,7,8-tetrahydrofolate-binding site is contributed by 355 to 357 (SPF).

The protein belongs to the SHMT family. Homodimer. The cofactor is pyridoxal 5'-phosphate.

It is found in the cytoplasm. The catalysed reaction is (6R)-5,10-methylene-5,6,7,8-tetrahydrofolate + glycine + H2O = (6S)-5,6,7,8-tetrahydrofolate + L-serine. Its pathway is one-carbon metabolism; tetrahydrofolate interconversion. The protein operates within amino-acid biosynthesis; glycine biosynthesis; glycine from L-serine: step 1/1. Its function is as follows. Catalyzes the reversible interconversion of serine and glycine with tetrahydrofolate (THF) serving as the one-carbon carrier. This reaction serves as the major source of one-carbon groups required for the biosynthesis of purines, thymidylate, methionine, and other important biomolecules. Also exhibits THF-independent aldolase activity toward beta-hydroxyamino acids, producing glycine and aldehydes, via a retro-aldol mechanism. This chain is Serine hydroxymethyltransferase, found in Stenotrophomonas maltophilia (strain R551-3).